Reading from the N-terminus, the 407-residue chain is SERPINE1 mRNA-binding protein 1 (407 aa).

Ser-25 bears the Phosphoserine mark. The tract at residues 33-227 is disordered; it reads AAENKKKEAG…GSGSHNWGTV (195 aa). Over residues 51–68 the composition is skewed to low complexity; the sequence is AKSAAQAAAQTNSNAAGK. Lys-52 carries the post-translational modification N6-acetyllysine; alternate. Residue Lys-52 forms a Glycyl lysine isopeptide (Lys-Gly) (interchain with G-Cter in SUMO1); alternate linkage. Lys-68 is modified (N6-acetyllysine). Basic and acidic residues-rich tracts occupy residues 70 to 80, 89 to 114, and 122 to 162; these read LRKESQKDRKN, ADKK…RRPD, and KLID…ERPI. Residue Lys-102 forms a Glycyl lysine isopeptide (Lys-Gly) (interchain with G-Cter in SUMO2) linkage. 2 positions are modified to N6-acetyllysine: Lys-122 and Lys-140. Positions 164–182 are enriched in gly residues; it reads GRGGLGRGRGGRGRGMGRG. Omega-N-methylarginine is present on residues Arg-165 and Arg-188. Residues 183–199 show a composition bias toward basic and acidic residues; that stretch reads DGFDSRGKREFDRHSGS. Phosphoserine occurs at positions 197, 199, 203, 205, and 208. Residue Lys-211 is modified to N6-acetyllysine; alternate. Lys-211 is covalently cross-linked (Glycyl lysine isopeptide (Lys-Gly) (interchain with G-Cter in SUMO2); alternate). Omega-N-methylarginine is present on Arg-216. Ser-221 is subject to Phosphoserine. Residue Thr-226 is modified to Phosphothreonine. Lys-228 participates in a covalent cross-link: Glycyl lysine isopeptide (Lys-Gly) (interchain with G-Cter in SUMO1); alternate. Residue Lys-228 forms a Glycyl lysine isopeptide (Lys-Gly) (interchain with G-Cter in SUMO2); alternate linkage. A phosphoserine mark is found at Leu-231, Ser-234, and Tyr-237. At Ser-234 the chain carries Phosphothreonine. A Phosphothreonine modification is found at Lys-240. Residues 242–256 are compositionally biased toward polar residues; it reads ISYNCSDLDQSNVTE. Disordered stretches follow at residues 242 to 288 and 327 to 407; these read ISYN…KEMT and SKSE…PALA. Residues 261 to 274 are compositionally biased toward basic and acidic residues; the sequence is GEEHPVADTENKEN. A Glycyl lysine isopeptide (Lys-Gly) (interchain with G-Cter in SUMO2) cross-link involves residue Lys-280. The segment covering 327 to 341 has biased composition (basic and acidic residues); that stretch reads SKSEEAHAEDSVMDH. An N6-acetyllysine modification is found at Lys-328. Ser-329 is modified (phosphoserine). The segment covering 362–371 has biased composition (gly residues); sequence GRPGRGGRGG. Omega-N-methylarginine is present on residues Arg-363, Arg-366, and Arg-369. Phosphoserine is present on residues Ser-391 and Ser-393.

The protein belongs to the SERBP1-HABP4 family. As to quaternary structure, associates with mature 80S ribosomes. Interacts with EEF2/eEF2; interaction sequesters EEF2/eEF2 at the A-site of the ribosome, thereby blocking the interaction sites of the mRNA-tRNA complex, promoting ribosome stabilization and hibernation. Interacts with SPIN1. Interacts with CHD3 and TDRD3. Interacts with ZDHHC17 (via ANK repeats). In terms of processing, phosphorylation by MTOR inhibits SERBP1 and relieves ribosome hibernation.

The protein localises to the cytoplasm. Its subcellular location is the nucleus. It localises to the perinuclear region. Its function is as follows. Ribosome-binding protein that promotes ribosome hibernation, a process during which ribosomes are stabilized in an inactive state and preserved from proteasomal degradation. Acts via its association with EEF2/eEF2 factor, sequestering EEF2/eEF2 at the A-site of the ribosome and promoting ribosome stabilization and storage in an inactive state. May also play a role in the regulation of mRNA stability: binds to the 3'-most 134 nt of the SERPINE1/PAI1 mRNA, a region which confers cyclic nucleotide regulation of message decay. Seems to play a role in PML-nuclear bodies formation. This is SERPINE1 mRNA-binding protein 1 from Mus musculus (Mouse).